Here is an 858-residue protein sequence, read N- to C-terminus: G2-specific protein kinase nim-1 (858 aa).

The region spanning 7-290 is the Protein kinase domain; the sequence is YELLEKIGHG…TATLLNLPIV (284 aa). Residues 13-21 and lysine 36 each bind ATP; that span reads IGHGSFGII. The active-site Proton acceptor is aspartate 161. Position 194 is a phosphothreonine; by autocatalysis (threonine 194). The stretch at 291–383 forms a coiled coil; the sequence is RLMRKEKEVV…QARVEAELQR (93 aa). Disordered regions lie at residues 495-693 and 747-858; these read TKAP…LPQA and SAVD…LSQS. Positions 516–525 are enriched in basic and acidic residues; the sequence is SNWEVPRETE. Acidic residues predominate over residues 526–535; that stretch reads MIDSGDESEA. 2 stretches are compositionally biased toward polar residues: residues 548–572 and 580–598; these read SSKN…NSNV and SKQT…SSIG. Low complexity predominate over residues 636 to 648; it reads SANNINNSSNGGS. Positions 650-661 are enriched in polar residues; the sequence is APSSTVTSNITV. Over residues 676-691 the composition is skewed to low complexity; the sequence is SSFSQQQNNQPQQSLP. Residues 760–780 show a composition bias toward polar residues; sequence GQSQLPTRPRSQPQPITANFE. The span at 781–802 shows a compositional bias: low complexity; that stretch reads QQQQQQQSNTNSISSSNSAGSG.

It belongs to the protein kinase superfamily. CAMK Ser/Thr protein kinase family.

Its subcellular location is the nucleus. It catalyses the reaction L-seryl-[protein] + ATP = O-phospho-L-seryl-[protein] + ADP + H(+). The enzyme catalyses L-threonyl-[protein] + ATP = O-phospho-L-threonyl-[protein] + ADP + H(+). Protein kinase that plays an important role in mitotic regulation. The sequence is that of G2-specific protein kinase nim-1 (nim-1) from Neurospora crassa (strain ATCC 24698 / 74-OR23-1A / CBS 708.71 / DSM 1257 / FGSC 987).